A 255-amino-acid polypeptide reads, in one-letter code: Small ribosomal subunit protein eS1 (255 aa).

Basic residues predominate over residues 1 to 18; that stretch reads MAVGKNKRLSKGKKGLKK. A disordered region spans residues 1-28; sequence MAVGKNKRLSKGKKGLKKRTQDPFSRKD. Ala-2 carries the post-translational modification N-acetylalanine; partial. The span at 19–28 shows a compositional bias: basic and acidic residues; it reads RTQDPFSRKD.

This sequence belongs to the eukaryotic ribosomal protein eS1 family. As to quaternary structure, component of the small ribosomal subunit. Mature ribosomes consist of a small (40S) and a large (60S) subunit. The 40S subunit contains about 33 different proteins and 1 molecule of RNA (18S). The 60S subunit contains about 49 different proteins and 3 molecules of RNA (25S, 5.8S and 5S).

It localises to the cytoplasm. This is Small ribosomal subunit protein eS1 from Paracoccidioides lutzii (strain ATCC MYA-826 / Pb01) (Paracoccidioides brasiliensis).